Here is a 346-residue protein sequence, read N- to C-terminus: Hydroxymethylglutaryl-CoA synthase (346 aa).

Asp28 serves as a coordination point for (3S)-3-hydroxy-3-methylglutaryl-CoA. Residue Glu80 is the Proton donor/acceptor of the active site. 2 residues coordinate (3S)-3-hydroxy-3-methylglutaryl-CoA: Cys112 and Thr153. Cys112 acts as the Acyl-thioester intermediate in catalysis. Arg199 contributes to the CoA binding site. The (3S)-3-hydroxy-3-methylglutaryl-CoA site is built by Thr201 and His234. His234 acts as the Proton donor/acceptor in catalysis. Residue Lys239 coordinates CoA. (3S)-3-hydroxy-3-methylglutaryl-CoA contacts are provided by Lys243, Asn266, and Ser296.

Belongs to the thiolase-like superfamily. Archaeal HMG-CoA synthase family. In terms of assembly, interacts with acetoacetyl-CoA thiolase that catalyzes the precedent step in the pathway and with a DUF35 protein. The acetoacetyl-CoA thiolase/HMG-CoA synthase complex channels the intermediate via a fused CoA-binding site, which allows for efficient coupling of the endergonic thiolase reaction with the exergonic HMGCS reaction.

It carries out the reaction acetoacetyl-CoA + acetyl-CoA + H2O = (3S)-3-hydroxy-3-methylglutaryl-CoA + CoA + H(+). It participates in metabolic intermediate biosynthesis; (R)-mevalonate biosynthesis; (R)-mevalonate from acetyl-CoA: step 2/3. Catalyzes the condensation of acetyl-CoA with acetoacetyl-CoA to form 3-hydroxy-3-methylglutaryl-CoA (HMG-CoA). Functions in the mevalonate (MVA) pathway leading to isopentenyl diphosphate (IPP), a key precursor for the biosynthesis of isoprenoid compounds that are building blocks of archaeal membrane lipids. The polypeptide is Hydroxymethylglutaryl-CoA synthase (Methanothermobacter thermautotrophicus (strain ATCC 29096 / DSM 1053 / JCM 10044 / NBRC 100330 / Delta H) (Methanobacterium thermoautotrophicum)).